We begin with the raw amino-acid sequence, 482 residues long: tRNA sulfurtransferase (482 aa).

The region spanning 61–165 (LTIRDALTRI…DDRLLLIKGR (105 aa)) is the THUMP domain. ATP contacts are provided by residues 183–184 (LI), K265, G287, and Q296. An intrachain disulfide couples C344 to C456. One can recognise a Rhodanese domain in the interval 404 to 482 (FGPNDVILDI…GFNNVKVYRP (79 aa)). C456 (cysteine persulfide intermediate) is an active-site residue.

The protein belongs to the ThiI family.

The protein resides in the cytoplasm. The catalysed reaction is [ThiI sulfur-carrier protein]-S-sulfanyl-L-cysteine + a uridine in tRNA + 2 reduced [2Fe-2S]-[ferredoxin] + ATP + H(+) = [ThiI sulfur-carrier protein]-L-cysteine + a 4-thiouridine in tRNA + 2 oxidized [2Fe-2S]-[ferredoxin] + AMP + diphosphate. The enzyme catalyses [ThiS sulfur-carrier protein]-C-terminal Gly-Gly-AMP + S-sulfanyl-L-cysteinyl-[cysteine desulfurase] + AH2 = [ThiS sulfur-carrier protein]-C-terminal-Gly-aminoethanethioate + L-cysteinyl-[cysteine desulfurase] + A + AMP + 2 H(+). Its pathway is cofactor biosynthesis; thiamine diphosphate biosynthesis. Catalyzes the ATP-dependent transfer of a sulfur to tRNA to produce 4-thiouridine in position 8 of tRNAs, which functions as a near-UV photosensor. Also catalyzes the transfer of sulfur to the sulfur carrier protein ThiS, forming ThiS-thiocarboxylate. This is a step in the synthesis of thiazole, in the thiamine biosynthesis pathway. The sulfur is donated as persulfide by IscS. The sequence is that of tRNA sulfurtransferase from Shigella flexneri.